Reading from the N-terminus, the 971-residue chain is GEM-interacting protein (971 aa).

At Ser-19 the chain carries Phosphoserine. Disordered stretches follow at residues 41 to 79, 231 to 267, and 383 to 476; these read AGDP…PEGP, LRAR…AQAK, and DTKK…IENG. Positions 44–56 are enriched in basic and acidic residues; the sequence is PVRREDLEPDKAD. Over residues 59-69 the composition is skewed to polar residues; the sequence is TVVTEENSEAS. Ser-75, Ser-235, Ser-238, Ser-247, Ser-436, and Ser-440 each carry phosphoserine. Positions 85-348 constitute an F-BAR domain; that stretch reads EELDLRLIRT…CCVPFEPGQR (264 aa). The span at 458–471 shows a compositional bias: acidic residues; sequence SSDDFEERDPDLGD. A Phorbol-ester/DAG-type zinc finger spans residues 492-536; sequence THRLRRLRGPAKCRECEAFMVSGTECEECFLTCHKRCLETLLILC. The 204-residue stretch at 553 to 756 folds into the Rho-GAP domain; that stretch reads LQLPRDFPEE…FLIVHYEQIF (204 aa). Thr-659 bears the Phosphothreonine mark. The segment at 799-865 is disordered; that stretch reads IALDSSPDPK…LGAQSRGHFS (67 aa). The span at 805-817 shows a compositional bias: basic and acidic residues; that stretch reads PDPKHHSALEKCP. Phosphoserine occurs at positions 884, 908, and 924.

Interacts with GEM through its N-terminal.

Functionally, stimulates, in vitro and in vivo, the GTPase activity of RhoA. The polypeptide is GEM-interacting protein (Gmip) (Mus musculus (Mouse)).